The following is a 552-amino-acid chain: Amino-acid acetyltransferase, mitochondrial (552 aa).

A mitochondrion-targeting transit peptide spans 1-32 (MIKTWIRCLTTEVRYHQPNAHGRSLVMSVLNS). The region spanning 379-545 (QTGKSDPVSK…LRDYAKYVRD (167 aa)) is the N-acetyltransferase domain.

Belongs to the acetyltransferase family.

It is found in the mitochondrion. It carries out the reaction L-glutamate + acetyl-CoA = N-acetyl-L-glutamate + CoA + H(+). The protein operates within amino-acid biosynthesis; L-arginine biosynthesis; N(2)-acetyl-L-ornithine from L-glutamate: step 1/4. In terms of biological role, N-acetylglutamate synthase involved in arginine biosynthesis. In Kluyveromyces lactis (strain ATCC 8585 / CBS 2359 / DSM 70799 / NBRC 1267 / NRRL Y-1140 / WM37) (Yeast), this protein is Amino-acid acetyltransferase, mitochondrial (ARG2).